A 1212-amino-acid chain; its full sequence is Solute carrier family 12 member 2 (1212 aa).

An N-acetylmethionine modification is found at Met-1. The Cytoplasmic portion of the chain corresponds to 1 to 286; the sequence is MEPRPTAPSS…AESKGVVKFG (286 aa). Disordered stretches follow at residues 36–81, 112–138, and 150–193; these read GTAV…QSRF, GAKQ…AKGR, and SSAE…GGGS. A phosphoserine mark is found at Ser-77 and Ser-79. An RFXV motif 1 motif is present at residues 80–83; it reads RFQV. The span at 127-137 shows a compositional bias: basic and acidic residues; it reads EPAKGSEEAKG. An RFXV motif 2 motif is present at residues 138-141; it reads RFRV. Over residues 150 to 160 the composition is skewed to low complexity; that stretch reads SSAEDSLSDAA. 3 positions are modified to phosphothreonine; by OXSR1 and STK39: Thr-203, Thr-207, and Thr-212. 2 positions are modified to phosphothreonine: Thr-217 and Thr-230. Ser-242 is subject to Phosphoserine. Phosphothreonine is present on Thr-266. A discontinuously helical transmembrane segment spans residues 287-316; it reads WIKGVLVRCMLNIWGVMLFIRLSWIVGQAG. Leu-297 serves as a coordination point for Na(+). K(+)-binding residues include Asn-298 and Ile-299. A Na(+)-binding site is contributed by Trp-300. The chloride site is built by Gly-301, Val-302, and Met-303. A helical transmembrane segment spans residues 317 to 336; the sequence is IGLSVLVIMMATVVTTITGL. The Cytoplasmic portion of the chain corresponds to 337–367; it reads STSAIATNGFVRGGGAYYLISRSLGPEFGGA. Residues 368–395 traverse the membrane as a helical segment; the sequence is IGLIFAFANAVAVAMYVVGFAETVVELL. Phe-372 lines the chloride pocket. Tyr-383 contacts K(+). Over 396 to 405 the chain is Extracellular; it reads KEHSILMIDE. A helical transmembrane segment spans residues 406-429; sequence INDIRIIGAITVVILLGISVAGME. Over 430–432 the chain is Cytoplasmic; sequence WEA. The chain crosses the membrane as a helical span at residues 433 to 454; that stretch reads KAQIVLLVILLLAIGDFVIGTF. The Extracellular segment spans residues 455-486; that stretch reads IPLESKKPKGFFGYKSEIFNENFGPDFREEET. The chain crosses the membrane as a discontinuously helical span at residues 487 to 504; it reads FFSVFAIFFPAATGILAG. Residues Pro-496, Ala-497, and Thr-499 each coordinate K(+). Chloride contacts are provided by Pro-496 and Ala-497. Gly-500 and Ile-501 together coordinate chloride. Residues 505–519 are Cytoplasmic-facing; it reads ANISGDLADPQSAIP. A helical transmembrane segment spans residues 520–541; it reads KGTLLAILITTLVYVGIAVSVG. Over 542-598 the chain is Extracellular; the sequence is SCVVRDATGNVNDTIVTELTNCTSAACKLNFDFSSCESSPCSYGLMNNFQVMSMVSG. Residues Asn-553 and Asn-562 are each glycosylated (N-linked (GlcNAc...) asparagine). Cystine bridges form between Cys-563-Cys-568 and Cys-577-Cys-582. A helical transmembrane segment spans residues 599-623; sequence FTPLISAGIFSATLSSALASLVSAP. Ala-610, Ser-613, and Ser-614 together coordinate Na(+). The Cytoplasmic segment spans residues 624 to 651; that stretch reads KIFQALCKDNIYPAFQMFAKGYGKNNEP. Helical transmembrane passes span 652-672 and 673-691; these read LRGY…AELN and VIAP…LINF. Chloride-binding residues include Phe-682 and Tyr-686. Over 692-714 the chain is Cytoplasmic; sequence SVFHASLAKSPGWRPAFKYYNMW. 2 helical membrane passes run 715 to 732 and 733 to 745; these read ISLL…VINW and WAAL…VLGL. Over 746–1212 the chain is Cytoplasmic; it reads YIYVTYKKPD…NHQSVLTFYS (467 aa). The scissor helix stretch occupies residues 761-778; the sequence is STQALTYLNALQHSIRLS. Ser-940 and Ser-944 each carry phosphoserine. The segment covering 962 to 978 has biased composition (basic and acidic residues); that stretch reads LDTSKPLSEKPITHKVE. The disordered stretch occupies residues 962 to 989; it reads LDTSKPLSEKPITHKVEEEDGKTATQPL. Ser-994 is modified (phosphoserine).

The protein belongs to the SLC12A transporter family. As to quaternary structure, homodimer; adopts a domain-swap conformation at the scissor helices connecting the transmembrane domain and C-terminal domain. In terms of processing, phosphorylated at Thr-203, Thr-207 and Thr-212 by OXSR1/OSR1 and STK39/SPAK downstream of WNK kinases (WNK1, WNK2, WNK3 or WNK4), promoting its activity. In terms of tissue distribution, expressed in many tissues.

It localises to the basolateral cell membrane. The catalysed reaction is K(+)(out) + 2 chloride(out) + Na(+)(out) = K(+)(in) + 2 chloride(in) + Na(+)(in). Activated following phosphorylation by OXSR1/OSR1 and STK39/SPAK downstream of WNK kinases (WNK1, WNK2, WNK3 or WNK4). Inhibited by bumetanide. Inhibited by furosemide. In terms of biological role, cation-chloride cotransporter which mediates the electroneutral transport of chloride, potassium and/or sodium ions across the membrane. Plays a vital role in the regulation of ionic balance and cell volume. This is Solute carrier family 12 member 2 (SLC12A2) from Homo sapiens (Human).